A 77-amino-acid polypeptide reads, in one-letter code: MDYQRLLFLFAVAMVITTTVALPKDTALMDGQLQKRGTPCKCHGYIGVYWFMLAGCPNGYGYNLSCPYFLGICCVKK.

Positions 1 to 21 (MDYQRLLFLFAVAMVITTTVA) are cleaved as a signal peptide. Residues 22-34 (LPKDTALMDGQLQ) constitute a propeptide that is removed on maturation. Disulfide bonds link Cys40-Cys73, Cys42-Cys66, and Cys56-Cys74. A Methionine sulfoxide; partial modification is found at Met52.

Belongs to the sea anemone type 3 (BDS) potassium channel toxin family. Toxin occurs in two forms in the mucus, Hmg 1b-2 which is not oxidized and Hmg 1b-2 MetOx which is oxidized at Met-52.

Its subcellular location is the secreted. It localises to the nematocyst. In terms of biological role, the non-oxidized toxin is remarkably non-selective with activity on many different ion channels. Weakly and reversibly inhibits rat and human homomeric ASIC1 (isoform ASIC1a) (IC(50)=4.8 uM, and IC(50)=14.6 uM), and ASIC3 (IC(50)=15.9 uM). Molecular modeling interaction with ASIC1a suggests that this peptide hinders the collapse of acidic pockets and stabilizes nonconducting channels state. It activates several potassium channels including Kv1.1/KCNA1, Kv1.2/KCNA2, and drosophila Shaker IR. It moderately to potently inhibits potassium channels including Kv1.3/KCNA3, Kv1.4/KCNA4, Kv1.5/KCNA5, Kv1.6/KCNA6, Kv2.1/KCNB1, Kv4.2/KCND2, Kv7.1/KCNQ1, Kv7.2/Kv7.3 (KCNQ2/KCNQ3), Kv7.4/KCNQ4, hERG/KCNH2, and C.elegans QKT1. On sodium channels, it moderately to potently inhibits Nav1.1/SCN1A, Nav1.2/SCN2A, Nav1.3/SCN3A, Nav1.4/SCN4A, Nav1.5/SCN5A, Nav1.6/SCN8A, Nav1.7/SCN9A, Nav1.8/SCN10A, and B.germanica BgNav. It also moderately to potently inhibits Cav3.1/CACNA1G, Cav3.2/CACNA1H, and Cav3.3/CACNA1I. Significant shifts in the voltage-current relationship are observed on Kv and Nav, depending on the channel isoform, whereas the toxin does not seem to modulate the voltage-sensor domains of Cav channels, acting mainly as a pore blocker. Does not activate nicotinic acetylcholine receptors (nAChR), but potentiates ACh-elicited current of human alpha-7/CHRNA7 nAChR. Is also able to bind T.californica muscle-type nAChRs. In vivo, causes an excitatory effect in mice behavior. Also shows antihyperalgesic and analgesic activity in the acid-induced muscle pain mice model, and weak anti-inflammatory effect in models of acute local inflammation. Its function is as follows. Forms an oxidized toxin derivative (Hmg 1b-2 MetOx). Able to bind T.californica muscle-type nAChRs (alpha-1-beta-1-delta-epsilon (CHRNA1-CHRNB1-CHRND-CHRNE)). The sequence is that of Pi/alpha-stichotoxin-Hmg5b from Heteractis magnifica (Magnificent sea anemone).